We begin with the raw amino-acid sequence, 631 residues long: Probable G-protein coupled receptor 153 (631 aa).

The Extracellular segment spans residues Met-1–Ala-11. The helical transmembrane segment at Val-12–Val-32 threads the bilayer. The Cytoplasmic segment spans residues Gly-33–Pro-41. A helical transmembrane segment spans residues Leu-42–Ala-62. Residues Thr-63–Lys-84 lie on the Extracellular side of the membrane. A helical transmembrane segment spans residues Val-85 to Ser-105. The Cytoplasmic portion of the chain corresponds to Tyr-106–Gln-126. The chain crosses the membrane as a helical span at residues Ala-127 to Val-147. The Extracellular portion of the chain corresponds to Gly-148–Arg-162. The helical transmembrane segment at Phe-163–Ser-183 threads the bilayer. Topologically, residues Val-184 to Thr-243 are cytoplasmic. A helical transmembrane segment spans residues Gly-244 to Val-264. The Extracellular segment spans residues Ser-265 to Pro-276. The chain crosses the membrane as a helical span at residues Trp-277–Leu-297. Residues Trp-298–Ser-631 are Cytoplasmic-facing. Disordered regions lie at residues Leu-486–Ser-518, Gln-546–Ala-590, and Cys-603–Ser-631. Residues Ser-605–Ser-617 show a composition bias toward low complexity.

It belongs to the G-protein coupled receptor 1 family.

Its subcellular location is the cell membrane. Functionally, orphan receptor. This is Probable G-protein coupled receptor 153 (Gpr153) from Mus musculus (Mouse).